We begin with the raw amino-acid sequence, 101 residues long: Small ribosomal subunit protein uS14 (101 aa).

It belongs to the universal ribosomal protein uS14 family. In terms of assembly, part of the 30S ribosomal subunit. Contacts proteins S3 and S10.

In terms of biological role, binds 16S rRNA, required for the assembly of 30S particles and may also be responsible for determining the conformation of the 16S rRNA at the A site. The protein is Small ribosomal subunit protein uS14 of Ectopseudomonas mendocina (strain ymp) (Pseudomonas mendocina).